A 524-amino-acid polypeptide reads, in one-letter code: Serine/threonine-protein kinase PAK 2 (524 aa).

The segment at 1–81 (MSDNGELEDK…PEISPPSDFE (81 aa)) is disordered. Serine 2 carries the post-translational modification N-acetylserine. 4 positions are modified to phosphoserine: serine 2, serine 20, serine 55, and serine 58. Threonine 60 is modified (phosphothreonine). Lysine 62 is subject to N6-acetyllysine. The residue at position 64 (serine 64) is a Phosphoserine. A compositionally biased stretch (basic and acidic residues) spans 67–81 (KEKERPEISPPSDFE). The interval 69–112 (KERPEISPPSDFEHTIHVGFDAVTGEFTGMPEQWARLLQTSNIT) is GTPase-binding. Residues 69–137 (KERPEISPPS…KFYDSNTVKQ (69 aa)) form an autoregulatory region region. In terms of domain architecture, CRIB spans 74-87 (ISPPSDFEHTIHVG). Residues 88-248 (FDAVTGEFTG…IVSIGDPKKK (161 aa)) form a linker region. Lysine 128 bears the N6-acetyllysine mark. Threonine 134 is subject to Phosphothreonine. Phosphotyrosine is present on tyrosine 139. Phosphoserine is present on serine 141. A Phosphothreonine modification is found at threonine 143. At serine 152 the chain carries Phosphoserine. Phosphothreonine occurs at positions 159 and 169. Acidic residues predominate over residues 169–178 (TEEDDDDEEA). Residues 169–188 (TEEDDDDEEAAPPVIAPRPD) form a disordered region. Serine 197 is modified (phosphoserine). The disordered stretch occupies residues 204 to 228 (APVGDSHVDSGAKSSDKQKKKTKMT). Residues 209 to 228 (SHVDSGAKSSDKQKKKTKMT) show a composition bias toward basic and acidic residues. The short motif at 245–251 (PKKKYTR) is the Nuclear localization signal element. The Protein kinase domain maps to 249–500 (YTRYEKIGQG…AKELLQHPFL (252 aa)). ATP-binding positions include 255–263 (IGQGASGTV) and lysine 278. Catalysis depends on aspartate 368, which acts as the Proton acceptor. Threonine 402 bears the Phosphothreonine; by autocatalysis mark.

Interacts tightly with GTP-bound but not GDP-bound CDC42/p21 and RAC1. Interacts with SH3MD4. Interacts with SCRIB. Interacts with ARHGEF7 and GIT1. PAK-2p34 interacts with ARHGAP10. Interacts with RAC1. Full-length PAK2 is autophosphorylated when activated by CDC42/p21. Following cleavage, both peptides, PAK-2p27 and PAK-2p34, become highly autophosphorylated. Autophosphorylation of PAK-2p27 can occur in the absence of any effectors and is dependent on phosphorylation of Thr-402, because PAK-2p27 is acting as an exogenous substrate. Post-translationally, during apoptosis proteolytically cleaved by caspase-3 or caspase-3-like proteases to yield active PAK-2p34. In terms of processing, ubiquitinated, leading to its proteasomal degradation.

Its subcellular location is the cytoplasm. The protein resides in the nucleus. It localises to the perinuclear region. The protein localises to the membrane. It carries out the reaction L-seryl-[protein] + ATP = O-phospho-L-seryl-[protein] + ADP + H(+). It catalyses the reaction L-threonyl-[protein] + ATP = O-phospho-L-threonyl-[protein] + ADP + H(+). Its activity is regulated as follows. Activated by binding small G proteins. Binding of GTP-bound CDC42 or RAC1 to the autoregulatory region releases monomers from the autoinhibited dimer, enables phosphorylation of Thr-402 and allows the kinase domain to adopt an active structure. Following caspase cleavage, autophosphorylated PAK-2p34 is constitutively active. Functionally, serine/threonine protein kinase that plays a role in a variety of different signaling pathways including cytoskeleton regulation, cell motility, cell cycle progression, apoptosis or proliferation. Acts as a downstream effector of the small GTPases CDC42 and RAC1. Activation by the binding of active CDC42 and RAC1 results in a conformational change and a subsequent autophosphorylation on several serine and/or threonine residues. Full-length PAK2 stimulates cell survival and cell growth. Phosphorylates MAPK4 and MAPK6 and activates the downstream target MAPKAPK5, a regulator of F-actin polymerization and cell migration. Phosphorylates JUN and plays an important role in EGF-induced cell proliferation. Phosphorylates many other substrates including histone H4 to promote assembly of H3.3 and H4 into nucleosomes, BAD, ribosomal protein S6, or MBP. Phosphorylates CASP7, thereby preventing its activity. Additionally, associates with ARHGEF7 and GIT1 to perform kinase-independent functions such as spindle orientation control during mitosis. On the other hand, apoptotic stimuli such as DNA damage lead to caspase-mediated cleavage of PAK2, generating PAK-2p34, an active p34 fragment that translocates to the nucleus and promotes cellular apoptosis involving the JNK signaling pathway. Caspase-activated PAK2 phosphorylates MKNK1 and reduces cellular translation. This is Serine/threonine-protein kinase PAK 2 (PAK2) from Oryctolagus cuniculus (Rabbit).